A 414-amino-acid chain; its full sequence is Cell division protein FtsA (414 aa).

It belongs to the FtsA/MreB family. Self-interacts. Interacts with FtsZ.

It is found in the cell inner membrane. Cell division protein that is involved in the assembly of the Z ring. May serve as a membrane anchor for the Z ring. The sequence is that of Cell division protein FtsA from Neisseria meningitidis serogroup B (strain ATCC BAA-335 / MC58).